Reading from the N-terminus, the 484-residue chain is NADH-quinone oxidoreductase subunit N (484 aa).

13 consecutive transmembrane segments (helical) span residues L10–F30, F40–G60, S74–T94, F108–L128, L129–H149, F163–A183, L203–A223, P237–M257, E272–V292, M299–T319, L327–L347, Y370–F390, and G404–L424.

Belongs to the complex I subunit 2 family. In terms of assembly, NDH-1 is composed of 14 different subunits. Subunits NuoA, H, J, K, L, M, N constitute the membrane sector of the complex.

It localises to the cell inner membrane. It carries out the reaction a quinone + NADH + 5 H(+)(in) = a quinol + NAD(+) + 4 H(+)(out). NDH-1 shuttles electrons from NADH, via FMN and iron-sulfur (Fe-S) centers, to quinones in the respiratory chain. The immediate electron acceptor for the enzyme in this species is believed to be ubiquinone. Couples the redox reaction to proton translocation (for every two electrons transferred, four hydrogen ions are translocated across the cytoplasmic membrane), and thus conserves the redox energy in a proton gradient. The protein is NADH-quinone oxidoreductase subunit N of Halorhodospira halophila (strain DSM 244 / SL1) (Ectothiorhodospira halophila (strain DSM 244 / SL1)).